The chain runs to 103 residues: Sec-independent protein translocase protein TatA (103 aa).

A helical transmembrane segment spans residues methionine 1–alanine 21. Positions valine 42–proline 103 are disordered. Low complexity predominate over residues proline 52 to proline 90. Residues glutamine 94–proline 103 are compositionally biased toward basic and acidic residues.

It belongs to the TatA/E family. The Tat system comprises two distinct complexes: a TatABC complex, containing multiple copies of TatA, TatB and TatC subunits, and a separate TatA complex, containing only TatA subunits. Substrates initially bind to the TatABC complex, which probably triggers association of the separate TatA complex to form the active translocon.

It localises to the cell membrane. In terms of biological role, part of the twin-arginine translocation (Tat) system that transports large folded proteins containing a characteristic twin-arginine motif in their signal peptide across membranes. TatA could form the protein-conducting channel of the Tat system. The chain is Sec-independent protein translocase protein TatA from Corynebacterium efficiens (strain DSM 44549 / YS-314 / AJ 12310 / JCM 11189 / NBRC 100395).